We begin with the raw amino-acid sequence, 237 residues long: N-demethylindolmycin N-methyltransferase (237 aa).

It belongs to the methyltransferase superfamily.

The catalysed reaction is N-demethylindolmycin + S-adenosyl-L-methionine = indolmycin + S-adenosyl-L-homocysteine + H(+). Functionally, involved in the biosynthesis of the antibiotic indolmycin, an inhibitor of the bacterial tryptophan-tRNA synthetases. Catalyzes the methylation of N-demethylindolmycin to yield indolmycin, with S-adenosylmethionine (AdoMet) acting as the methyl donor. In Streptomyces griseus, this protein is N-demethylindolmycin N-methyltransferase.